The following is a 224-amino-acid chain: SPI-2 type 3 secretion system stator protein (224 aa).

This sequence belongs to the SctL stator family. As to quaternary structure, the core secretion machinery of the T3SS is composed of approximately 20 different proteins, including cytoplasmic components, a base, an export apparatus and a needle. This subunit is part of the cytosolic complex. Interacts directly with SsaN/SctN2 (T3SS-2 ATPase).

It localises to the cytoplasm. Its function is as follows. Component of the type III secretion system (T3SS), also called injectisome, which is used to inject bacterial effector proteins into eukaryotic host cells. Acts as a regulator of the SsaN/SctN2 ATPase activity. This chain is SPI-2 type 3 secretion system stator protein, found in Salmonella typhimurium (strain LT2 / SGSC1412 / ATCC 700720).